Reading from the N-terminus, the 257-residue chain is Acetylglutamate kinase (257 aa).

Substrate-binding positions include 43-44 (GG), arginine 65, and asparagine 157. Residues 180–185 (DISSIL) and 208–210 (IIT) contribute to the ATP site.

Belongs to the acetylglutamate kinase family. ArgB subfamily. In terms of assembly, homodimer.

The protein localises to the cytoplasm. The enzyme catalyses N-acetyl-L-glutamate + ATP = N-acetyl-L-glutamyl 5-phosphate + ADP. It functions in the pathway amino-acid biosynthesis; L-arginine biosynthesis; N(2)-acetyl-L-ornithine from L-glutamate: step 2/4. Catalyzes the ATP-dependent phosphorylation of N-acetyl-L-glutamate. The polypeptide is Acetylglutamate kinase (Buchnera aphidicola subsp. Acyrthosiphon pisum (strain Tuc7)).